Reading from the N-terminus, the 297-residue chain is Dipicolinate synthase subunit A (297 aa).

Residues 164 to 165, Arg185, Thr203, 242 to 244, and 264 to 267 contribute to the NADP(+) site; these read RT, LAS, and APGL.

As to quaternary structure, dipicolinate synthase likely consists of DpaA and DpaB, since both proteins are required for DPA synthesis.

The enzyme catalyses (S)-2,3-dihydrodipicolinate + NADP(+) = dipicolinate + NADPH + H(+). Its function is as follows. Together with DpaB, catalyzes the conversion of dihydrodipicolinate to dipicolinate (DPA), which constitutes up to 10% of the dry weight of the spore. This Bacillus subtilis (strain 168) protein is Dipicolinate synthase subunit A (dpaA).